The primary structure comprises 91 residues: DNA-binding protein HU (91 aa).

It belongs to the bacterial histone-like protein family.

Histone-like DNA-binding protein which is capable of wrapping DNA to stabilize it, and thus to prevent its denaturation under extreme environmental conditions. Also seems to act as a fortuitous virulence factor in delayed sequelae by binding to heparan sulfate-proteoglycans in the extracellular matrix of target organs and acting as a nidus for in situ immune complex formation. The chain is DNA-binding protein HU (hup) from Streptococcus gordonii.